We begin with the raw amino-acid sequence, 151 residues long: UPF0178 protein Desal_2673 (151 aa).

Belongs to the UPF0178 family.

The polypeptide is UPF0178 protein Desal_2673 (Maridesulfovibrio salexigens (strain ATCC 14822 / DSM 2638 / NCIMB 8403 / VKM B-1763) (Desulfovibrio salexigens)).